Reading from the N-terminus, the 741-residue chain is 1,4-alpha-glucan branching enzyme GlgB 2 (741 aa).

Positions 1 to 38 (MALRDTSIPEPSGPVPPAPGACATAPPLDPTDRGRLLA) are disordered. The active-site Nucleophile is the aspartate 421. Glutamate 474 functions as the Proton donor in the catalytic mechanism.

It belongs to the glycosyl hydrolase 13 family. GlgB subfamily. As to quaternary structure, monomer.

The catalysed reaction is Transfers a segment of a (1-&gt;4)-alpha-D-glucan chain to a primary hydroxy group in a similar glucan chain.. It participates in glycan biosynthesis; glycogen biosynthesis. Catalyzes the formation of the alpha-1,6-glucosidic linkages in glycogen by scission of a 1,4-alpha-linked oligosaccharide from growing alpha-1,4-glucan chains and the subsequent attachment of the oligosaccharide to the alpha-1,6 position. This chain is 1,4-alpha-glucan branching enzyme GlgB 2 (glgB2), found in Streptomyces coelicolor (strain ATCC BAA-471 / A3(2) / M145).